A 367-amino-acid chain; its full sequence is Chorismate synthase (367 aa).

R48 contacts NADP(+). FMN-binding positions include 125-127 (RSS), G283, 298-302 (KPTPS), and R324.

The protein belongs to the chorismate synthase family. In terms of assembly, homotetramer. FMNH2 serves as cofactor.

The catalysed reaction is 5-O-(1-carboxyvinyl)-3-phosphoshikimate = chorismate + phosphate. The protein operates within metabolic intermediate biosynthesis; chorismate biosynthesis; chorismate from D-erythrose 4-phosphate and phosphoenolpyruvate: step 7/7. Functionally, catalyzes the anti-1,4-elimination of the C-3 phosphate and the C-6 proR hydrogen from 5-enolpyruvylshikimate-3-phosphate (EPSP) to yield chorismate, which is the branch point compound that serves as the starting substrate for the three terminal pathways of aromatic amino acid biosynthesis. This reaction introduces a second double bond into the aromatic ring system. The polypeptide is Chorismate synthase (Agathobacter rectalis (strain ATCC 33656 / DSM 3377 / JCM 17463 / KCTC 5835 / VPI 0990) (Eubacterium rectale)).